We begin with the raw amino-acid sequence, 63 residues long: Small integral membrane protein 43 (63 aa).

2 important for interaction with SLC2A1 and SLC2A3 regions span residues 7-29 (LLLY…FVVI) and 51-57 (HREPWGF). Residues 9–29 (LYLALFFFLLFLLFLLLFVVI) traverse the membrane as a helical segment.

In terms of assembly, interacts with glucose transporters SLC2A1/GLUT1 and SLC2A3/GLUT3; the interactions may promote SLC2A1- and SLC2A3-mediated glucose transport to meet the energy needs of mesendoderm differentiation.

The protein resides in the cell membrane. Functionally, required for mesendoderm differentiation. Interacts with glucose transporters and promotes glucose uptake. Probably augments the glucose uptake capacity of glucose transporter proteins to meet the energy needs of mesendoderm differentiation. The chain is Small integral membrane protein 43 from Homo sapiens (Human).